The primary structure comprises 231 residues: MALPKIYVALDCQTQEAADNLVSQLPAGKVGLKVGKELFTAIGPDWVKKQVEQGFSVFLDLKFHDIPNTVAKAVTSAAKIGVDIVNVHASGGTEMMSAARDALKQFDKPPLLIAVTVLTSMSDSDLNEIGIQATAEQQVLKLAKLAQQAGLNGVVCSAQEARMLKHDLGTSFKLVTPGIRPANSATGDQKRVMTPEAAIEAGVDYMVIGRPITQAADPTASVAEILTSIGE.

Residues Asp11, Lys33, 60–69 (DLKFHDIPNT), Thr119, Arg180, Gln189, Gly209, and Arg210 contribute to the substrate site. The Proton donor role is filled by Lys62.

This sequence belongs to the OMP decarboxylase family. Type 1 subfamily. In terms of assembly, homodimer.

It catalyses the reaction orotidine 5'-phosphate + H(+) = UMP + CO2. The protein operates within pyrimidine metabolism; UMP biosynthesis via de novo pathway; UMP from orotate: step 2/2. Functionally, catalyzes the decarboxylation of orotidine 5'-monophosphate (OMP) to uridine 5'-monophosphate (UMP). This is Orotidine 5'-phosphate decarboxylase from Idiomarina loihiensis (strain ATCC BAA-735 / DSM 15497 / L2-TR).